The following is a 1486-amino-acid chain: Chromosome partition protein MukB (1486 aa).

34–41 serves as a coordination point for ATP; that stretch reads GGNGAGKS. 3 coiled-coil regions span residues 326–418, 444–480, and 509–603; these read LEAD…QYNQ, LETF…QAYQ, and RHLA…RAPV. A flexible hinge region spans residues 666–783; sequence PGGSEDQRLN…EVPLFGRAAR (118 aa). Coiled coils occupy residues 835–923, 977–1115, and 1209–1266; these read EAEI…AKLE, EMLS…TAKA, and VEAI…QNVS.

This sequence belongs to the SMC family. MukB subfamily. As to quaternary structure, homodimerization via its hinge domain. Binds to DNA via its C-terminal region. Interacts, and probably forms a ternary complex, with MukE and MukF via its C-terminal region. The complex formation is stimulated by calcium or magnesium. Interacts with tubulin-related protein FtsZ.

Its subcellular location is the cytoplasm. The protein localises to the nucleoid. Plays a central role in chromosome condensation, segregation and cell cycle progression. Functions as a homodimer, which is essential for chromosome partition. Involved in negative DNA supercoiling in vivo, and by this means organize and compact chromosomes. May achieve or facilitate chromosome segregation by condensation DNA from both sides of a centrally located replisome during cell division. The chain is Chromosome partition protein MukB from Escherichia coli O6:K15:H31 (strain 536 / UPEC).